Reading from the N-terminus, the 164-residue chain is Ubiquitin-fold modifier-conjugating enzyme 1 (164 aa).

The active-site Glycyl thioester intermediate is cysteine 116.

It belongs to the ubiquitin-conjugating enzyme family. UFC1 subfamily.

Functionally, E2-like enzyme which forms an intermediate with UFM1 via a thioester linkage. The chain is Ubiquitin-fold modifier-conjugating enzyme 1 from Drosophila willistoni (Fruit fly).